The sequence spans 1063 residues: NAD-specific glutamate dehydrogenase (1063 aa).

The protein belongs to the Glu/Leu/Phe/Val dehydrogenases family. Highly divergent. As to quaternary structure, homotetramer.

The catalysed reaction is L-glutamate + NAD(+) + H2O = 2-oxoglutarate + NH4(+) + NADH + H(+). Allosterically activated by NADP(+). The sequence is that of NAD-specific glutamate dehydrogenase from Achlya klebsiana.